The chain runs to 222 residues: Protein-L-isoaspartate O-methyltransferase (222 aa).

Ser-69 is an active-site residue.

It belongs to the methyltransferase superfamily. L-isoaspartyl/D-aspartyl protein methyltransferase family.

It is found in the cytoplasm. It carries out the reaction [protein]-L-isoaspartate + S-adenosyl-L-methionine = [protein]-L-isoaspartate alpha-methyl ester + S-adenosyl-L-homocysteine. Its function is as follows. Catalyzes the methyl esterification of L-isoaspartyl residues in peptides and proteins that result from spontaneous decomposition of normal L-aspartyl and L-asparaginyl residues. It plays a role in the repair and/or degradation of damaged proteins. This chain is Protein-L-isoaspartate O-methyltransferase, found in Caulobacter vibrioides (strain NA1000 / CB15N) (Caulobacter crescentus).